The sequence spans 192 residues: Xanthine phosphoribosyltransferase (192 aa).

Positions 20 and 27 each coordinate xanthine. 128–132 lines the 5-phospho-alpha-D-ribose 1-diphosphate pocket; it reads AHGEA. A xanthine-binding site is contributed by Lys156.

Belongs to the purine/pyrimidine phosphoribosyltransferase family. Xpt subfamily. Homodimer.

It localises to the cytoplasm. It catalyses the reaction XMP + diphosphate = xanthine + 5-phospho-alpha-D-ribose 1-diphosphate. It functions in the pathway purine metabolism; XMP biosynthesis via salvage pathway; XMP from xanthine: step 1/1. In terms of biological role, converts the preformed base xanthine, a product of nucleic acid breakdown, to xanthosine 5'-monophosphate (XMP), so it can be reused for RNA or DNA synthesis. In Lactobacillus acidophilus (strain ATCC 700396 / NCK56 / N2 / NCFM), this protein is Xanthine phosphoribosyltransferase.